The primary structure comprises 61 residues: Large ribosomal subunit protein bL32 (61 aa).

Over residues 1 to 16 the composition is skewed to basic residues; it reads MAVPKRKTSPSRRGMR. The interval 1 to 61 is disordered; sequence MAVPKRKTSP…RQILKPKAEA (61 aa). A compositionally biased stretch (basic and acidic residues) spans 28–44; it reads VEDKDSGELRRPHHLDL.

Belongs to the bacterial ribosomal protein bL32 family.

This chain is Large ribosomal subunit protein bL32, found in Xanthobacter autotrophicus (strain ATCC BAA-1158 / Py2).